A 134-amino-acid chain; its full sequence is Large ribosomal subunit protein bL20 (134 aa).

This sequence belongs to the bacterial ribosomal protein bL20 family.

Binds directly to 23S ribosomal RNA and is necessary for the in vitro assembly process of the 50S ribosomal subunit. It is not involved in the protein synthesizing functions of that subunit. The chain is Large ribosomal subunit protein bL20 from Rhizobium rhizogenes (strain K84 / ATCC BAA-868) (Agrobacterium radiobacter).